A 227-amino-acid polypeptide reads, in one-letter code: Cytochrome c oxidase subunit 2 (227 aa).

Residues M1 to S14 lie on the Mitochondrial intermembrane side of the membrane. A helical transmembrane segment spans residues P15–M45. At L46 to Q59 the chain is on the mitochondrial matrix side. The chain crosses the membrane as a helical span at residues E60–M87. Residues D88–L227 are Mitochondrial intermembrane-facing. Cu cation-binding residues include H161, C196, E198, C200, H204, and M207. E198 contacts Mg(2+). A Phosphotyrosine modification is found at Y218.

The protein belongs to the cytochrome c oxidase subunit 2 family. Component of the cytochrome c oxidase (complex IV, CIV), a multisubunit enzyme composed of 14 subunits. The complex is composed of a catalytic core of 3 subunits MT-CO1, MT-CO2 and MT-CO3, encoded in the mitochondrial DNA, and 11 supernumerary subunits COX4I, COX5A, COX5B, COX6A, COX6B, COX6C, COX7A, COX7B, COX7C, COX8 and NDUFA4, which are encoded in the nuclear genome. The complex exists as a monomer or a dimer and forms supercomplexes (SCs) in the inner mitochondrial membrane with NADH-ubiquinone oxidoreductase (complex I, CI) and ubiquinol-cytochrome c oxidoreductase (cytochrome b-c1 complex, complex III, CIII), resulting in different assemblies (supercomplex SCI(1)III(2)IV(1) and megacomplex MCI(2)III(2)IV(2)). Found in a complex with TMEM177, COA6, COX18, COX20, SCO1 and SCO2. Interacts with TMEM177 in a COX20-dependent manner. Interacts with COX20. Interacts with COX16. Cu cation serves as cofactor.

It localises to the mitochondrion inner membrane. It carries out the reaction 4 Fe(II)-[cytochrome c] + O2 + 8 H(+)(in) = 4 Fe(III)-[cytochrome c] + 2 H2O + 4 H(+)(out). Functionally, component of the cytochrome c oxidase, the last enzyme in the mitochondrial electron transport chain which drives oxidative phosphorylation. The respiratory chain contains 3 multisubunit complexes succinate dehydrogenase (complex II, CII), ubiquinol-cytochrome c oxidoreductase (cytochrome b-c1 complex, complex III, CIII) and cytochrome c oxidase (complex IV, CIV), that cooperate to transfer electrons derived from NADH and succinate to molecular oxygen, creating an electrochemical gradient over the inner membrane that drives transmembrane transport and the ATP synthase. Cytochrome c oxidase is the component of the respiratory chain that catalyzes the reduction of oxygen to water. Electrons originating from reduced cytochrome c in the intermembrane space (IMS) are transferred via the dinuclear copper A center (CU(A)) of subunit 2 and heme A of subunit 1 to the active site in subunit 1, a binuclear center (BNC) formed by heme A3 and copper B (CU(B)). The BNC reduces molecular oxygen to 2 water molecules using 4 electrons from cytochrome c in the IMS and 4 protons from the mitochondrial matrix. This chain is Cytochrome c oxidase subunit 2 (MT-CO2), found in Felis catus (Cat).